Reading from the N-terminus, the 83-residue chain is Small integral membrane protein 22 (83 aa).

A helical transmembrane segment spans residues 32–52; that stretch reads VAFIVFLTFMGTVLLLLLLVV. The tract at residues 60–83 is disordered; the sequence is SPGPRRESPRKERPKGVDNLALEP. The segment covering 63–75 has biased composition (basic and acidic residues); it reads PRRESPRKERPKG.

Interacts with CANX and DDOST. Interacts with SQLE; this interaction modulates lipid droplet formation.

The protein localises to the membrane. The protein resides in the late endosome. In terms of biological role, may modulate lipid droplet formation throught interaction with SQLE. This is Small integral membrane protein 22 from Homo sapiens (Human).